We begin with the raw amino-acid sequence, 157 residues long: Crossover junction endodeoxyribonuclease RuvC (157 aa).

Active-site residues include Asp-7, Glu-66, and Asp-139. Mg(2+)-binding residues include Asp-7, Glu-66, and Asp-139.

Belongs to the RuvC family. In terms of assembly, homodimer which binds Holliday junction (HJ) DNA. The HJ becomes 2-fold symmetrical on binding to RuvC with unstacked arms; it has a different conformation from HJ DNA in complex with RuvA. In the full resolvosome a probable DNA-RuvA(4)-RuvB(12)-RuvC(2) complex forms which resolves the HJ. Mg(2+) serves as cofactor.

Its subcellular location is the cytoplasm. The catalysed reaction is Endonucleolytic cleavage at a junction such as a reciprocal single-stranded crossover between two homologous DNA duplexes (Holliday junction).. Its function is as follows. The RuvA-RuvB-RuvC complex processes Holliday junction (HJ) DNA during genetic recombination and DNA repair. Endonuclease that resolves HJ intermediates. Cleaves cruciform DNA by making single-stranded nicks across the HJ at symmetrical positions within the homologous arms, yielding a 5'-phosphate and a 3'-hydroxyl group; requires a central core of homology in the junction. The consensus cleavage sequence is 5'-(A/T)TT(C/G)-3'. Cleavage occurs on the 3'-side of the TT dinucleotide at the point of strand exchange. HJ branch migration catalyzed by RuvA-RuvB allows RuvC to scan DNA until it finds its consensus sequence, where it cleaves and resolves the cruciform DNA. This is Crossover junction endodeoxyribonuclease RuvC from Helicobacter pylori (strain P12).